Here is a 683-residue protein sequence, read N- to C-terminus: Protein kinase C eta type (683 aa).

Positions 1–118 constitute a C2 domain; the sequence is MSSGTMKFNG…LRTTGASDTF (118 aa). Phosphoserine; by autocatalysis is present on residues serine 28 and serine 32. Phorbol-ester/DAG-type zinc fingers lie at residues 171–222 and 245–295; these read GHKF…VTAC and PHKF…APNC. Serine 317 carries the phosphoserine modification. The disordered stretch occupies residues 320–342; the sequence is SKLVSRSTLRRQGKESSKEGNGI. In terms of domain architecture, Protein kinase spans 355-614; sequence FEFIRVLGKG…EHAILRHPFF (260 aa). Residues 361–369 and lysine 384 contribute to the ATP site; that span reads LGKGSFGKV. Residue aspartate 479 is the Proton acceptor of the active site. Threonine 513 carries the post-translational modification Phosphothreonine; by PDPK1. Residues 615-683 enclose the AGC-kinase C-terminal domain; it reads KEIDWAQLNH…FSYVSPELQP (69 aa). At threonine 656 the chain carries Phosphothreonine. A Phosphoserine modification is found at serine 675.

This sequence belongs to the protein kinase superfamily. AGC Ser/Thr protein kinase family. PKC subfamily. In terms of assembly, interacts with FYN. Interacts with RALA. Interacts with DGKQ. Interacts with PRKCH upstream open reading frame 2; the interaction leads to inhibition of kinase activity. In terms of tissue distribution, most abundant in lung, less in heart and skin.

It localises to the cytoplasm. The catalysed reaction is L-seryl-[protein] + ATP = O-phospho-L-seryl-[protein] + ADP + H(+). It catalyses the reaction L-threonyl-[protein] + ATP = O-phospho-L-threonyl-[protein] + ADP + H(+). Novel PKCs (PRKCD, PRKCE, PRKCH and PRKCQ) are calcium-insensitive, but activated by diacylglycerol (DAG) and phosphatidylserine. Three specific sites; Thr-513 (activation loop of the kinase domain), Thr-656 (turn motif) and Ser-675 (hydrophobic region), need to be phosphorylated for its full activation. Inhibited by PRKCH upstream open reading frame 2. Its function is as follows. Calcium-independent, phospholipid- and diacylglycerol (DAG)-dependent serine/threonine-protein kinase that is involved in the regulation of cell differentiation in keratinocytes and pre-B cell receptor, mediates regulation of epithelial tight junction integrity and foam cell formation, and is required for glioblastoma proliferation and apoptosis prevention in MCF-7 cells. In keratinocytes, binds and activates the tyrosine kinase FYN, which in turn blocks epidermal growth factor receptor (EGFR) signaling and leads to keratinocyte growth arrest and differentiation. Associates with the cyclin CCNE1-CDK2-CDKN1B complex and inhibits CDK2 kinase activity, leading to RB1 dephosphorylation and thereby G1 arrest in keratinocytes. In association with RALA activates actin depolymerization, which is necessary for keratinocyte differentiation. In the pre-B cell receptor signaling, functions downstream of BLNK by up-regulating IRF4, which in turn activates L chain gene rearrangement. Regulates epithelial tight junctions (TJs) by phosphorylating occludin (OCLN) on threonine residues, which is necessary for the assembly and maintenance of TJs. In association with PLD2 and via TLR4 signaling, is involved in lipopolysaccharide (LPS)-induced RGS2 down-regulation and foam cell formation. Upon PMA stimulation, mediates glioblastoma cell proliferation by activating the mTOR pathway, the PI3K/AKT pathway and the ERK1-dependent phosphorylation of ELK1. Involved in the protection of glioblastoma cells from irradiation-induced apoptosis by preventing caspase-9 activation. In camptothecin-treated MCF-7 cells, regulates NF-kappa-B upstream signaling by activating IKBKB, and confers protection against DNA damage-induced apoptosis. Promotes oncogenic functions of ATF2 in the nucleus while blocking its apoptotic function at mitochondria. Phosphorylates ATF2 which promotes its nuclear retention and transcriptional activity and negatively regulates its mitochondrial localization. The sequence is that of Protein kinase C eta type (PRKCH) from Homo sapiens (Human).